Consider the following 318-residue polypeptide: Pyrimidine-specific ribonucleoside hydrolase RihA (318 aa).

Residue histidine 240 is part of the active site.

It belongs to the IUNH family. RihA subfamily.

Its function is as follows. Hydrolyzes cytidine or uridine to ribose and cytosine or uracil, respectively. The polypeptide is Pyrimidine-specific ribonucleoside hydrolase RihA (Shewanella oneidensis (strain ATCC 700550 / JCM 31522 / CIP 106686 / LMG 19005 / NCIMB 14063 / MR-1)).